The chain runs to 138 residues: MQRNLTQSKEALLKSYNSRLKEDIRSMRENFEEIIRLAKGENDTQLSKITQCEQDTYETQVRAANIVRAGESLMKLVSDIKQYLILNDFHSVNEAICSNSTLYRTTQIDRDNKLMAVRDDMAADLYDLEEEYYTSIYK.

The stretch at Leu-13–Gly-40 forms a coiled coil.

Belongs to the Mediator complex subunit 22 family. In terms of assembly, component of the Mediator complex.

It localises to the nucleus. Functionally, component of the Mediator complex, a coactivator involved in the regulated transcription of nearly all RNA polymerase II-dependent genes. Mediator functions as a bridge to convey information from gene-specific regulatory proteins to the basal RNA polymerase II transcription machinery. Mediator is recruited to promoters by direct interactions with regulatory proteins and serves as a scaffold for the assembly of a functional preinitiation complex with RNA polymerase II and the general transcription factors. This chain is Mediator of RNA polymerase II transcription subunit 22 (MED22), found in Anopheles gambiae (African malaria mosquito).